A 923-amino-acid chain; its full sequence is Progesterone receptor (923 aa).

Basic and acidic residues predominate over residues 1 to 11 (MTELQAKDPRT). The segment at 1–49 (MTELQAKDPRTLHTSGAAPSPTHVGSPLLARLDPDPFQGSQHSDASSVV) is disordered. The AF3; mediates transcriptional activation (in isoform B) stretch occupies residues 1–164 (MTELQAKDPR…PATKGLLSPL (164 aa)). The segment at 1–556 (MTELQAKDPR…YGFDSLPQKI (556 aa)) is modulating, Pro-Rich. A Glycyl lysine isopeptide (Lys-Gly) (interchain with G-Cter in SUMO) cross-link involves residue Lys-7. Ser-20 is modified (phosphoserine). The segment covering 38 to 49 (QGSQHSDASSVV) has biased composition (polar residues). Positions 56-60 (LDRLL) match the LXXL motif 1 motif. The disordered stretch occupies residues 67 to 111 (AQELPDEKTQNQQSLSDVEGAFSGVEASRRRSRNPRAPEKDSRLL). At Ser-82 the chain carries Phosphoserine. Residues 115–119 (LDTLL) carry the LXXL motif 2 motif. 2 positions are modified to phosphoserine: Ser-130 and Ser-162. Residues 152-239 (RSVPATKGLL…EGSAGPLLKS (88 aa)) are disordered. Residues 165-304 (MSRPESKAGD…LATTVVDFIH (140 aa)) form a mediates transcriptional transrepression (in isoform A) region. A Nuclear localization signal motif is present at residues 184 to 188 (VLPKA). Residues Ser-190 and Ser-213 each carry the phosphoserine modification. Phosphoserine; by MAPK1 is present on Ser-293. The segment at 333-371 (AAQVPFAPPRGSPSAPSPPVPCGDFPDCTYPPEGDPKED) is disordered. Residues 338 to 353 (FAPPRGSPSAPSPPVP) are compositionally biased toward pro residues. The residue at position 344 (Ser-344) is a Phosphoserine; by MAPK. Lys-387 is covalently cross-linked (Glycyl lysine isopeptide (Lys-Gly) (interchain with G-Cter in SUMO); alternate). A Glycyl lysine isopeptide (Lys-Gly) (interchain with G-Cter in ubiquitin); alternate cross-link involves residue Lys-387. Phosphoserine; by CDK2 is present on Ser-399. The segment at 412–435 (TFPDFPLPPRPPRAPPSRPGEAAV) is disordered. The segment covering 416–429 (FPLPPRPPRAPPSR) has biased composition (pro residues). Residues 450–536 (SALECILYKA…VYPPYLNYLR (87 aa)) form an AF1; mediates transcriptional activation region. A Glycyl lysine isopeptide (Lys-Gly) (interchain with G-Cter in SUMO) cross-link involves residue Lys-521. NR C4-type zinc fingers lie at residues 557 to 577 (CLIC…CGSC) and 593 to 617 (CAGR…LRKC). Positions 557–629 (CLICGDEASG…AGMVLGGRKF (73 aa)) form a DNA-binding region, nuclear receptor. Position 666 is a phosphoserine (Ser-666). An NR LBD domain is found at 669 to 903 (QEIQLVPPLI…EFPEMMSEVI (235 aa)). The AF2; mediates transcriptional activation stretch occupies residues 677-923 (LINLLMSIEP…MVKPLLFHKK (247 aa)). Progesterone is bound at residue Arg-756.

Belongs to the nuclear hormone receptor family. NR3 subfamily. As to quaternary structure, interacts with SMARD1 and UNC45A. Interacts with CUEDC2; the interaction promotes ubiquitination, decreases sumoylation, and represses transcriptional activity. Interacts with PIAS3; the interaction promotes sumoylation of PR in a hormone-dependent manner, inhibits DNA-binding, and alters nuclear export. Interacts with SP1; the interaction requires ligand-induced phosphorylation on Ser-344. Interacts with PRMT2. Isoform A interacts with NCOR2. Isoform B (but not isoform A) interacts with NCOA2 and NCOA1. Isoform B (but not isoform A) interacts with KLF9. Interacts with GTF2B. Phosphorylated on multiple serine sites. Several of these sites are hormone-dependent. Phosphorylation on Ser-293 is highly hormone-dependent and modulates ubiquitination and sumoylation on Lys-387. Phosphorylation on Ser-344 also requires induction by hormone. Basal phosphorylation on Ser-82, Ser-190 and Ser-399 is increased in response to progesterone and can be phosphorylated in vitro by the CDK2-A1 complex. Increased levels of phosphorylation on Ser-399 also in the presence of EGF, heregulin, IGF, PMA and FBS. Phosphorylation at this site by CDK2 is ligand-independent, and increases nuclear translocation and transcriptional activity. Phosphorylation at Ser-293, but not at Ser-190, is impaired during the G(2)/M phase of the cell cycle. Phosphorylation on Ser-344 by ERK1/2 MAPK is required for interaction with SP1. In terms of processing, sumoylation is hormone-dependent and represses transcriptional activity. Sumoylation on all three sites is enhanced by PIAS3. Desumoylated by SENP1. Sumoylation on Lys-387, the main site of sumoylation, is repressed by ubiquitination on the same site, and modulated by phosphorylation at Ser-293. Post-translationally, ubiquitination is hormone-dependent and represses sumoylation on the same site. Promoted by MAPK-mediated phosphorylation on Ser-293. Ubiquitinated by UBR5, leading to its degradation: UBR5 specifically recognizes and binds ligand-bound PGR when it is not associated with coactivators (NCOAs). In presence of NCOAs, the UBR5-degron is not accessible, preventing its ubiquitination and degradation. Palmitoylated by ZDHHC7 and ZDHHC21. Palmitoylation is required for plasma membrane targeting and for rapid intracellular signaling via ERK and AKT kinases and cAMP generation. In terms of tissue distribution, isoform A and isoform B are expressed in the pituitary.

It is found in the nucleus. It localises to the cytoplasm. The steroid hormones and their receptors are involved in the regulation of eukaryotic gene expression and affect cellular proliferation and differentiation in target tissues. Depending on the isoform, progesterone receptor functions as a transcriptional activator or repressor. Its function is as follows. Ligand-dependent transdominant repressor of steroid hormone receptor transcriptional activity including repression of its isoform B, MR and ER. Transrepressional activity may involve recruitment of corepressor NCOR2. Functionally, transcriptional activator of several progesteron-dependent promoters in a variety of cell types. Involved in activation of SRC-dependent MAPK signaling on hormone stimulation. The chain is Progesterone receptor (Pgr) from Rattus norvegicus (Rat).